Consider the following 526-residue polypeptide: Peptide chain release factor 3 (526 aa).

The tr-type G domain maps to 9 to 277 (DKRRTFAIIS…GIVEWAPKPL (269 aa)). GTP is bound by residues 18–25 (SHPDAGKT), 86–90 (DTPGH), and 140–143 (NKCD).

It belongs to the TRAFAC class translation factor GTPase superfamily. Classic translation factor GTPase family. PrfC subfamily.

The protein resides in the cytoplasm. Functionally, increases the formation of ribosomal termination complexes and stimulates activities of RF-1 and RF-2. It binds guanine nucleotides and has strong preference for UGA stop codons. It may interact directly with the ribosome. The stimulation of RF-1 and RF-2 is significantly reduced by GTP and GDP, but not by GMP. The sequence is that of Peptide chain release factor 3 from Shewanella frigidimarina (strain NCIMB 400).